We begin with the raw amino-acid sequence, 82 residues long: Small ribosomal subunit protein bS16 (82 aa).

Belongs to the bacterial ribosomal protein bS16 family.

In Alcanivorax borkumensis (strain ATCC 700651 / DSM 11573 / NCIMB 13689 / SK2), this protein is Small ribosomal subunit protein bS16.